The following is a 186-amino-acid chain: uncharacterized protein (186 aa).

The next 3 membrane-spanning stretches (helical) occupy residues 43–63 (GAWVIHIVLIAALRLIFHAIP), 69–89 (LAWTLTNLTYMAGSFIMFHWV), and 143–163 (WMFLVNIWALFMVLIPKLPAV).

Its subcellular location is the endoplasmic reticulum membrane. This is an uncharacterized protein from Schizosaccharomyces pombe (strain 972 / ATCC 24843) (Fission yeast).